A 296-amino-acid chain; its full sequence is Ribonuclease HIII (296 aa).

Residues 80-296 (LALIGSDEVG…NTKKAYQRLK (217 aa)) form the RNase H type-2 domain. Residues Asp-86, Glu-87, and Asp-191 each coordinate a divalent metal cation.

This sequence belongs to the RNase HII family. RnhC subfamily. Mn(2+) serves as cofactor. It depends on Mg(2+) as a cofactor.

The protein resides in the cytoplasm. It catalyses the reaction Endonucleolytic cleavage to 5'-phosphomonoester.. Its function is as follows. Endonuclease that specifically degrades the RNA of RNA-DNA hybrids. This chain is Ribonuclease HIII, found in Streptococcus thermophilus (strain ATCC BAA-491 / LMD-9).